Reading from the N-terminus, the 811-residue chain is Endothelin-converting enzyme 2 (811 aa).

Over 1-106 the chain is Cytoplasmic; sequence MNVALQELGA…QLLGSRTQLE (106 aa). Residues 22 to 64 form a disordered region; sequence LRDEDAPETPVEGGASPDAMEVGKGASPFSPGPSPGMTPGTPR. The chain crosses the membrane as a helical; Signal-anchor for type II membrane protein span at residues 107 to 127; sequence LVLAGASLLLAALLLGCLVAL. At 128–811 the chain is on the lumenal side; sequence GVQYHRDPSH…MNPGQLCEVW (684 aa). In terms of domain architecture, Peptidase M13 spans 139–811; it reads TCLTEACIRV…MNPGQLCEVW (673 aa). 5 disulfides stabilise this stretch: Cys140–Cys145, Cys163–Cys796, Cys171–Cys756, Cys227–Cys476, and Cys685–Cys808. N-linked (GlcNAc...) asparagine glycosylation is found at Asn207, Asn211, Asn252, Asn312, Asn357, Asn424, and Asn580. Position 648 (His648) interacts with Zn(2+). The active site involves Glu649. His652 provides a ligand contact to Zn(2+). N-linked (GlcNAc...) asparagine glycosylation is found at Asn673 and Asn681. Residue Glu708 participates in Zn(2+) binding. Catalysis depends on Asp712, which acts as the Proton donor.

This sequence belongs to the peptidase M13 family. Zn(2+) serves as cofactor.

Its subcellular location is the golgi apparatus membrane. It localises to the cytoplasmic vesicle. The protein resides in the secretory vesicle membrane. It catalyses the reaction Hydrolysis of the 21-Trp-|-Val-22 bond in big endothelin to form endothelin 1.. Its function is as follows. Converts big endothelin-1 to endothelin-1. Also involved in the processing of various neuroendocrine peptides, including neurotensin, angiotensin I, substance P, proenkephalin-derived peptides, and prodynorphin-derived peptides. May play a role in amyloid-beta processing. This chain is Endothelin-converting enzyme 2, found in Homo sapiens (Human).